The primary structure comprises 1356 residues: Kinesin-like protein KIF24 (1356 aa).

The region spanning 1-64 (MASWLYECLC…FQLIKIIKIM (64 aa)) is the SAM domain. Residues 93–119 (GPRRQLHFDSPSASKDKMANNETGSLS) are disordered. The residue at position 102 (Ser102) is a Phosphoserine. Residues 218–541 (KIRVCVRKRP…LRYADRVKEL (324 aa)) enclose the Kinesin motor domain. 308–315 (GQTGAGKT) serves as a coordination point for ATP. Ser473 bears the Phosphoserine mark. The segment at 473-702 (SLLALKECIR…PTRGKKVQPV (230 aa)) is interaction with MPHOSPH9. A compositionally biased stretch (polar residues) spans 552-571 (TSQNQTSANASPKRIQSSPV). Disordered stretches follow at residues 552–581 (TSQN…CSPK), 597–664 (PTKV…LCSE), 788–840 (EGRL…STAL), 897–947 (RGAL…HQKP), and 964–998 (VPEQ…DQRD). Ser579 bears the Phosphoserine mark. Residue Thr615 is modified to Phosphothreonine; by NEK2. Ser616 is subject to Phosphoserine; by NEK2. Residues Ser640, Ser817, and Ser820 each carry the phosphoserine modification. Positions 640–653 (SPRKGTTRSGHSIK) are enriched in basic residues. A compositionally biased stretch (acidic residues) spans 810 to 821 (QAEDLDDSDFSE). Polar residues predominate over residues 830–840 (QPAMKQGSTAL). The segment covering 970-979 (GSLSSPSPEN) has biased composition (polar residues). The residue at position 1008 (Ser1008) is a Phosphoserine. Residues 1109 to 1140 (LSSSPPDNRPSGDLPALSPSPIHQHSPDKLPG) are disordered.

This sequence belongs to the TRAFAC class myosin-kinesin ATPase superfamily. Kinesin family. As to quaternary structure, interacts with CCP110, CEP97, TALPID3. Interacts with MPHOSPH9. As to expression, expressed in brain, spinal cord, and small intestine.

Its subcellular location is the cytoplasm. It localises to the cytoskeleton. It is found in the microtubule organizing center. The protein resides in the centrosome. The protein localises to the centriole. Its function is as follows. Microtubule-dependent motor protein that acts as a negative regulator of ciliogenesis by mediating recruitment of CCP110 to mother centriole in cycling cells, leading to restrict nucleation of cilia at centrioles. Mediates depolymerization of microtubules of centriolar origin, possibly to suppress aberrant cilia formation. Following activation by NEK2 involved in disassembly of primary cilium during G2/M phase but does not disassemble fully formed ciliary axonemes. As cilium assembly and disassembly is proposed to coexist in a dynamic equilibrium may suppress nascent cilium assembly and, potentially, ciliar re-assembly in cells that have already disassembled their cilia ensuring the completion of cilium removal in the later stages of the cell cycle. Plays an important role in recruiting MPHOSPH9, a negative regulator of cilia formation to the distal end of mother centriole. The protein is Kinesin-like protein KIF24 (Kif24) of Mus musculus (Mouse).